A 155-amino-acid polypeptide reads, in one-letter code: uncharacterized protein (155 aa).

This is an uncharacterized protein from Saccharomyces cerevisiae (strain ATCC 204508 / S288c) (Baker's yeast).